A 104-amino-acid polypeptide reads, in one-letter code: Circadian clock oscillator protein KaiB (104 aa).

This sequence belongs to the KaiB family. In terms of assembly, the KaiABC complex composition changes during the circadian cycle to control KaiC phosphorylation. Complexes KaiC(6), KaiA(2-4):KaiC(6), KaiB(6):KaiC(6) and KaiC(6):KaiB(6):KaiA(12) are among the most important forms, many form cooperatively. Undergoes a major conformational rearrangment; in the free state forms homotetramers as a dimer of dimers. When bound to the CI domain of KaiC switches to a monomeric thioredoxin-fold (KaiB(fs)). KaiB(fs) binds CikA, leading it to dephosphorylate phospho-RpaA.

Functionally, key component of the KaiABC oscillator complex, which constitutes the main circadian regulator in cyanobacteria. Complex composition changes during the circadian cycle to control KaiC phosphorylation. KaiA stimulates KaiC autophosphorylation, while KaiB sequesters KaiA, leading to KaiC autodephosphorylation. Phospho-Ser-431 KaiC accumulation triggers binding of KaiB to form the KaiB(6):KaiC(6) complex, leading to changes in output regulators CikA and SasA. KaiB switches to a thioredoxin-like fold (KaiB(fs)) when bound to KaiC. KaiB(6):KaiC(6) formation exposes a site for KaiA binding that sequesters KaiA from KaiC, making the KaiC(6):KaiB(6):KaiA(12) complex that results in KaiC autodephosphorylation. A metamorphic protein which reversibly switches between an inactive tetrameric fold and a rare, thioredoxin-like monomeric fold (KaiB(fs)). KaiB(fs) binds phospho-KaiC, KaiA and CikA. KaiA and CikA compete for binding to KaiB(fs), and KaiB(fs) and SasA compete for binding to KaiC, thus the clock oscillator and output signal pathway are tightly coupled. This Microcystis aeruginosa (strain NIES-843 / IAM M-2473) protein is Circadian clock oscillator protein KaiB.